The chain runs to 400 residues: Enoyl-[acyl-carrier-protein] reductase [NADH] (400 aa).

NAD(+)-binding positions include G48–Y53, F74–E75, D111–A112, and L139–A140. Residue Y225 participates in substrate binding. Catalysis depends on Y235, which acts as the Proton donor. NAD(+) is bound by residues K244 and V273–T275.

It belongs to the TER reductase family. In terms of assembly, monomer.

It catalyses the reaction a 2,3-saturated acyl-[ACP] + NAD(+) = a (2E)-enoyl-[ACP] + NADH + H(+). It functions in the pathway lipid metabolism; fatty acid biosynthesis. Functionally, involved in the final reduction of the elongation cycle of fatty acid synthesis (FAS II). Catalyzes the reduction of a carbon-carbon double bond in an enoyl moiety that is covalently linked to an acyl carrier protein (ACP). The protein is Enoyl-[acyl-carrier-protein] reductase [NADH] of Burkholderia cenocepacia (strain HI2424).